The chain runs to 622 residues: WD repeat-containing protein 70 (622 aa).

A compositionally biased stretch (basic and acidic residues) spans 37 to 55 (TAVERSKKTLEAREKEEQI). The interval 37–141 (TAVERSKKTL…DNPVKGIPDS (105 aa)) is disordered. Low complexity predominate over residues 67–84 (SSSRQKNTDTSSSSSGSE). Positions 120–132 (SDDEDEEQHEDDD) are enriched in acidic residues. WD repeat units lie at residues 148–187 (HGTKTVSALGLDPSGARLVTGGFDYDVRFWDFAGMDASLQ), 195–236 (CECH…ECVK), 249–289 (GHTA…KHKG), 298–337 (GKRVIPTCCTYSRDGKFIAAGCQDGSIQIWDRNMSVHTKF), 344–383 (TPGTDTSCVTFSYAGNILATRGGDDTLKTWDIRKFKNPLN), 389–434 (ANYF…KVYE), and 437–476 (VTEASVVRCLWHPKLNQIMVGTGNGLAKVYYDPNRSQRGA). Residues 508–533 (REPRQRSTRKQLEKDRLDPVKSHKPE) are compositionally biased toward basic and acidic residues. Disordered stretches follow at residues 508–549 (REPR…GTHG) and 602–622 (AEVESDEEETDNEPEWKKRKI). The span at 539–549 (PGRGGRVGTHG) shows a compositional bias: gly residues. The span at 604–614 (VESDEEETDNE) shows a compositional bias: acidic residues.

The protein belongs to the WD repeat GAD-1 family.

The chain is WD repeat-containing protein 70 (wdr70) from Xenopus tropicalis (Western clawed frog).